The primary structure comprises 271 residues: Tryptophan synthase alpha chain (271 aa).

Catalysis depends on proton acceptor residues Glu-56 and Asp-67.

This sequence belongs to the TrpA family. As to quaternary structure, tetramer of two alpha and two beta chains.

It catalyses the reaction (1S,2R)-1-C-(indol-3-yl)glycerol 3-phosphate + L-serine = D-glyceraldehyde 3-phosphate + L-tryptophan + H2O. The protein operates within amino-acid biosynthesis; L-tryptophan biosynthesis; L-tryptophan from chorismate: step 5/5. The alpha subunit is responsible for the aldol cleavage of indoleglycerol phosphate to indole and glyceraldehyde 3-phosphate. This chain is Tryptophan synthase alpha chain, found in Mycolicibacterium paratuberculosis (strain ATCC BAA-968 / K-10) (Mycobacterium paratuberculosis).